Reading from the N-terminus, the 445-residue chain is tRNA(Ile)-lysidine synthase (445 aa).

38-43 (SGGLDS) is an ATP binding site.

It belongs to the tRNA(Ile)-lysidine synthase family.

The protein localises to the cytoplasm. The catalysed reaction is cytidine(34) in tRNA(Ile2) + L-lysine + ATP = lysidine(34) in tRNA(Ile2) + AMP + diphosphate + H(+). Ligates lysine onto the cytidine present at position 34 of the AUA codon-specific tRNA(Ile) that contains the anticodon CAU, in an ATP-dependent manner. Cytidine is converted to lysidine, thus changing the amino acid specificity of the tRNA from methionine to isoleucine. The sequence is that of tRNA(Ile)-lysidine synthase from Neisseria gonorrhoeae (strain ATCC 700825 / FA 1090).